A 467-amino-acid polypeptide reads, in one-letter code: Ribulose bisphosphate carboxylase large chain (467 aa).

The residue at position 5 (K5) is an N6,N6,N6-trimethyllysine. Residues N114 and T164 each contribute to the substrate site. The active-site Proton acceptor is K166. Position 168 (K168) interacts with substrate. 3 residues coordinate Mg(2+): K192, D194, and E195. N6-carboxylysine is present on K192. The Proton acceptor role is filled by H285. Substrate is bound by residues R286, H318, and S370.

The protein belongs to the RuBisCO large chain family. Type I subfamily. As to quaternary structure, heterohexadecamer of 8 large chains and 8 small chains; disulfide-linked. The disulfide link is formed within the large subunit homodimers. Mg(2+) is required as a cofactor. Post-translationally, the disulfide bond which can form in the large chain dimeric partners within the hexadecamer appears to be associated with oxidative stress and protein turnover.

It localises to the plastid. It is found in the chloroplast. The enzyme catalyses 2 (2R)-3-phosphoglycerate + 2 H(+) = D-ribulose 1,5-bisphosphate + CO2 + H2O. It carries out the reaction D-ribulose 1,5-bisphosphate + O2 = 2-phosphoglycolate + (2R)-3-phosphoglycerate + 2 H(+). RuBisCO catalyzes two reactions: the carboxylation of D-ribulose 1,5-bisphosphate, the primary event in carbon dioxide fixation, as well as the oxidative fragmentation of the pentose substrate in the photorespiration process. Both reactions occur simultaneously and in competition at the same active site. The chain is Ribulose bisphosphate carboxylase large chain from Eriodictyon californicum (California yerba santa).